Here is a 62-residue protein sequence, read N- to C-terminus: DNA-directed RNA polymerase subunit omega (62 aa).

Belongs to the RNA polymerase subunit omega family. As to quaternary structure, the RNAP catalytic core consists of 2 alpha, 1 beta, 1 beta' and 1 omega subunit. When a sigma factor is associated with the core the holoenzyme is formed, which can initiate transcription.

The catalysed reaction is RNA(n) + a ribonucleoside 5'-triphosphate = RNA(n+1) + diphosphate. Promotes RNA polymerase assembly. Latches the N- and C-terminal regions of the beta' subunit thereby facilitating its interaction with the beta and alpha subunits. The sequence is that of DNA-directed RNA polymerase subunit omega from Wigglesworthia glossinidia brevipalpis.